The primary structure comprises 153 residues: D-aminoacyl-tRNA deacylase (153 aa).

A Gly-cisPro motif, important for rejection of L-amino acids motif is present at residues 140-141; that stretch reads GP.

It belongs to the DTD family. As to quaternary structure, homodimer.

It localises to the cytoplasm. It carries out the reaction glycyl-tRNA(Ala) + H2O = tRNA(Ala) + glycine + H(+). The catalysed reaction is a D-aminoacyl-tRNA + H2O = a tRNA + a D-alpha-amino acid + H(+). In terms of biological role, an aminoacyl-tRNA editing enzyme that deacylates mischarged D-aminoacyl-tRNAs. Also deacylates mischarged glycyl-tRNA(Ala), protecting cells against glycine mischarging by AlaRS. Acts via tRNA-based rather than protein-based catalysis; rejects L-amino acids rather than detecting D-amino acids in the active site. By recycling D-aminoacyl-tRNA to D-amino acids and free tRNA molecules, this enzyme counteracts the toxicity associated with the formation of D-aminoacyl-tRNA entities in vivo and helps enforce protein L-homochirality. The protein is D-aminoacyl-tRNA deacylase of Trichodesmium erythraeum (strain IMS101).